A 442-amino-acid polypeptide reads, in one-letter code: tRNA-2-methylthio-N(6)-dimethylallyladenosine synthase (442 aa).

The region spanning 6–122 (RKFYIHTFGC…LPVLIAEAGK (117 aa)) is the MTTase N-terminal domain. [4Fe-4S] cluster is bound by residues Cys15, Cys51, Cys85, Cys157, Cys161, and Cys164. The region spanning 143-373 (RTQSLTAFVP…IDLQNGISAE (231 aa)) is the Radical SAM core domain. The TRAM domain maps to 376–439 (RLAIGSVVEV…SATLIGRAAE (64 aa)).

Belongs to the methylthiotransferase family. MiaB subfamily. As to quaternary structure, monomer. Requires [4Fe-4S] cluster as cofactor.

It localises to the cytoplasm. It carries out the reaction N(6)-dimethylallyladenosine(37) in tRNA + (sulfur carrier)-SH + AH2 + 2 S-adenosyl-L-methionine = 2-methylsulfanyl-N(6)-dimethylallyladenosine(37) in tRNA + (sulfur carrier)-H + 5'-deoxyadenosine + L-methionine + A + S-adenosyl-L-homocysteine + 2 H(+). Its function is as follows. Catalyzes the methylthiolation of N6-(dimethylallyl)adenosine (i(6)A), leading to the formation of 2-methylthio-N6-(dimethylallyl)adenosine (ms(2)i(6)A) at position 37 in tRNAs that read codons beginning with uridine. The sequence is that of tRNA-2-methylthio-N(6)-dimethylallyladenosine synthase from Chlorobium limicola (strain DSM 245 / NBRC 103803 / 6330).